The sequence spans 639 residues: ATP-dependent rRNA helicase spb4 (639 aa).

Positions 14–42 (WEAVSPSLSEWVLDAVASWGFSKMTPVQA) match the Q motif motif. Residues 45–249 (IPLFMAHKDV…RVGLRNPVKV (205 aa)) form the Helicase ATP-binding domain. 58–65 (AVTGSGKT) is a binding site for ATP. Positions 197–200 (DEAD) match the DEAD box motif. The Helicase C-terminal domain maps to 283 to 437 (TLRPILTSLQ…PISISDSDAS (155 aa)). Residues 521 to 624 (AYKDKQREKR…LRRAEKAAGK (104 aa)) are a coiled coil. Positions 536–639 (QESAEAGAQQ…GDDDEFEGFD (104 aa)) are disordered. The segment covering 575 to 622 (KHLQQEKRRWEKMTEEEKQKARETQKMLEEIRQKNEEARALRRAEKAA) has biased composition (basic and acidic residues). The segment covering 628 to 639 (NDGDDDEFEGFD) has biased composition (acidic residues).

The protein belongs to the DEAD box helicase family. DDX55/SPB4 subfamily. Component of pre-60S ribosomal complexes.

It is found in the nucleus. The protein localises to the nucleolus. The enzyme catalyses ATP + H2O = ADP + phosphate + H(+). Its function is as follows. ATP-binding RNA helicase involved in the biogenesis of 60S ribosomal subunits. Binds 90S pre-ribosomal particles and dissociates from pre-60S ribosomal particles after processing of 27SB pre-rRNA. Required for the normal formation of 18S rRNA through the processing of pre-rRNAs at sites A0, A1 and A2, and the normal formation of 25S and 5.8S rRNAs through the processing of pre-rRNAs at sites C1 and C2. In Aspergillus terreus (strain NIH 2624 / FGSC A1156), this protein is ATP-dependent rRNA helicase spb4.